Consider the following 372-residue polypeptide: tRNA pseudouridine synthase D (372 aa).

The active-site Nucleophile is the Asp-85. The 171-residue stretch at 160-330 (GFANYFGYQR…MQGSRRFMWG (171 aa)) folds into the TRUD domain.

This sequence belongs to the pseudouridine synthase TruD family.

It catalyses the reaction uridine(13) in tRNA = pseudouridine(13) in tRNA. In terms of biological role, responsible for synthesis of pseudouridine from uracil-13 in transfer RNAs. The protein is tRNA pseudouridine synthase D of Campylobacter jejuni subsp. jejuni serotype O:6 (strain 81116 / NCTC 11828).